The following is a 293-amino-acid chain: MAAASGASPQSEYIQHHLVHLNNLGEKQSVIAQFNVINYDSLFWSGLMGLIVIFCLWLAARRATAGVPGRFQGFVEMIVDMVNDQAKGIVQNAKSREFVAPLALTVFLWIILMNALDLLPVDLFPTIWRVTGLGAEHGDPLYYHRILPTADLNVPMGMSLGVLLLMFYYGIKIKHPAGFVKELFTAPFHAHGLAALVLAPFNLLLNLIEYAAKSVSLGMRLFGNMFAGELIFMLIALLGGAWTGFNASSIGLGIGHVLAGSVWAIFHILIVLLQAFIFMMLTLVYIGQAHEGH.

6 consecutive transmembrane segments (helical) span residues aspartate 40–alanine 60, phenylalanine 98–leucine 118, aspartate 151–isoleucine 171, phenylalanine 188–isoleucine 208, methionine 225–phenylalanine 245, and alanine 264–valine 284.

The protein belongs to the ATPase A chain family. In terms of assembly, F-type ATPases have 2 components, CF(1) - the catalytic core - and CF(0) - the membrane proton channel. CF(1) has five subunits: alpha(3), beta(3), gamma(1), delta(1), epsilon(1). CF(0) has three main subunits: a(1), b(2) and c(9-12). The alpha and beta chains form an alternating ring which encloses part of the gamma chain. CF(1) is attached to CF(0) by a central stalk formed by the gamma and epsilon chains, while a peripheral stalk is formed by the delta and b chains.

It is found in the cell inner membrane. In terms of biological role, key component of the proton channel; it plays a direct role in the translocation of protons across the membrane. The protein is ATP synthase subunit a of Bordetella avium (strain 197N).